A 335-amino-acid chain; its full sequence is Methionine aminopeptidase 1D, mitochondrial (335 aa).

The N-terminal 19 residues, 1-19 (MAAPIGVPLLVRGGCQRIL), are a transit peptide targeting the mitochondrion. His161 serves as a coordination point for substrate. Residues Asp178, Asp189, and His252 each coordinate a divalent metal cation. His259 lines the substrate pocket. Positions 284 and 315 each coordinate a divalent metal cation.

The protein belongs to the peptidase M24A family. Methionine aminopeptidase type 1 subfamily. Co(2+) is required as a cofactor. Zn(2+) serves as cofactor. The cofactor is Mn(2+). It depends on Fe(2+) as a cofactor.

Its subcellular location is the mitochondrion. It catalyses the reaction Release of N-terminal amino acids, preferentially methionine, from peptides and arylamides.. In terms of biological role, removes the N-terminal methionine from nascent proteins. The N-terminal methionine is often cleaved when the second residue in the primary sequence is small and uncharged (Met-Ala-, Cys, Gly, Pro, Ser, Thr, or Val). Requires deformylation of the N(alpha)-formylated initiator methionine before it can be hydrolyzed. The chain is Methionine aminopeptidase 1D, mitochondrial (Metap1d) from Mus musculus (Mouse).